A 319-amino-acid polypeptide reads, in one-letter code: Ribose-phosphate pyrophosphokinase (319 aa).

ATP contacts are provided by residues 41–43 and 100–101; these read DGE and RQ. Mg(2+) contacts are provided by His-134 and Asp-176. Lys-199 is an active-site residue. D-ribose 5-phosphate contacts are provided by residues Arg-201, Asp-225, and 229 to 233; that span reads DTAGT.

This sequence belongs to the ribose-phosphate pyrophosphokinase family. Class I subfamily. As to quaternary structure, homohexamer. Mg(2+) serves as cofactor.

It localises to the cytoplasm. It catalyses the reaction D-ribose 5-phosphate + ATP = 5-phospho-alpha-D-ribose 1-diphosphate + AMP + H(+). The protein operates within metabolic intermediate biosynthesis; 5-phospho-alpha-D-ribose 1-diphosphate biosynthesis; 5-phospho-alpha-D-ribose 1-diphosphate from D-ribose 5-phosphate (route I): step 1/1. In terms of biological role, involved in the biosynthesis of the central metabolite phospho-alpha-D-ribosyl-1-pyrophosphate (PRPP) via the transfer of pyrophosphoryl group from ATP to 1-hydroxyl of ribose-5-phosphate (Rib-5-P). This is Ribose-phosphate pyrophosphokinase from Clostridium perfringens (strain 13 / Type A).